The chain runs to 361 residues: UPF0283 membrane protein mlr0776 (361 aa).

The interval 1-33 (MTAPRKPAAFRIEPEAAPTQETPKARQAELSRK) is disordered. Residues 23–32 (PKARQAELSR) show a composition bias toward basic and acidic residues. Transmembrane regions (helical) follow at residues 73-93 (LFGS…VGLW) and 108-128 (LGWL…VILI).

This sequence belongs to the UPF0283 family.

Its subcellular location is the cell inner membrane. The sequence is that of UPF0283 membrane protein mlr0776 from Mesorhizobium japonicum (strain LMG 29417 / CECT 9101 / MAFF 303099) (Mesorhizobium loti (strain MAFF 303099)).